Here is a 116-residue protein sequence, read N- to C-terminus: MAPHGRKRKAGAAPMETVDKREKLAEGATVVIEHCTSURVYGRHAAALSQALQLEAPELPVQVNPSKPRRGSFEVTLLRSDNSRVELWTGIKKGPPRKLKFPEPQEVVEELKKYLS.

Lys20 carries the N6-acetyllysine modification. Residues 35–38 constitute a cross-link (cysteinyl-selenocysteine (Cys-Sec); redox-active); sequence CTSU. A non-standard amino acid (selenocysteine) is located at residue Sec38.

This sequence belongs to the SelWTH family.

May be involved in a redox-related process. This is Selenoprotein H from Mus musculus (Mouse).